A 1187-amino-acid chain; its full sequence is BAI1-associated protein 3 (1187 aa).

Residues 55–81 (SFRRRTEQDPGSASADPQEPATGAWKP) are disordered. The C2 1 domain occupies 176–335 (SLEEHTEAIE…VKSARANGTA (160 aa)). Residues Asp211, Asp217, Asp295, and Asp297 each coordinate Ca(2+). In terms of domain architecture, MHD1 spans 663-784 (FELYLTLADL…EATLFYTELL (122 aa)). The MHD2 domain maps to 888–996 (DEAVAPLMKY…CSTRECIEQF (109 aa)). A C2 2 domain is found at 1010–1136 (RFGRLSVRCH…GVARPQVGGG (127 aa)). Residues Leu1040, Asp1041, Asp1047, Asp1105, Asp1107, Ser1110, and Asp1113 each contribute to the Ca(2+) site.

This sequence belongs to the unc-13 family. As to quaternary structure, interacts with ADGRB1; this interaction is direct. Interacts with endosomal SNARE proteins VAMP3, VAMP4, STX6 and STX16; this interaction is increased in the presence of calcium. Ca(2+) serves as cofactor. Predominantly expressed in brain. Also expressed in nonneural tissues such as breast and testes epithelium.

It is found in the cytoplasm. It localises to the cytosol. Its subcellular location is the recycling endosome membrane. The protein resides in the late endosome membrane. The protein localises to the golgi apparatus. It is found in the trans-Golgi network membrane. It localises to the cell membrane. In terms of biological role, functions in endosome to Golgi retrograde transport. In response to calcium influx, may interact with SNARE fusion receptors and membrane phospholipids to mediate endosome fusion with the trans-Golgi network. By promoting the recycling of secretory vesicle transmembrane proteins, it indirectly controls dense-core secretory vesicle biogenesis, maturation and their ability to mediate the constitutive and regulated secretion of neurotransmitters and hormones. May regulate behavior and food intake by controlling calcium-stimulated exocytosis of neurotransmitters including NPY and serotonin and hormones like insulin. Proposed to play a role in hypothalamic neuronal firing by modulating gamma-aminobutyric acid (GABA)ergic inhibitory neurotransmission. This Homo sapiens (Human) protein is BAI1-associated protein 3.